The following is a 680-amino-acid chain: Penicillin-binding protein 2B (680 aa).

The Cytoplasmic portion of the chain corresponds to 1 to 8 (MRKFNSHS). Residues 9 to 29 (IPIRLNLLFSIVILLFMTIIG) form a helical membrane-spanning segment. Over 30 to 680 (RLLYMQVLNK…NLYQKYHPMN (651 aa)) the chain is Extracellular. The active-site Acyl-ester intermediate is Ser-386.

Belongs to the transpeptidase family. In terms of assembly, interacts with MreC in the elongasome.

The protein resides in the cell membrane. Functionally, a transpeptidase that forms peptide cross-links between adjacent glycan strands in cell wall peptidoglycan (PG). Part of the elongasome machinery that synthesizes peripheral PG. This is Penicillin-binding protein 2B from Streptococcus pneumoniae serotype 2 (strain D39 / NCTC 7466).